We begin with the raw amino-acid sequence, 317 residues long: MSNQLQALRDITTVVADTGDIEAIKKYQPVDATTNPSLLLKAAEMEQYRSHLENAVAWAKEQSDDADQQIIDAGDKLAVTIGTDIVNIVPGRISTEVDARLSFDTQASIEKAHKLIALYKEAGIDKSRILIKLASTWEGIKAAEHLEKEGINCNLTLLFSFAQAQACAEAGAYLISPFVGRILDWYKAKTGKTEYAASEDPGVQSVTKIYNYYKEHGYKTVVMGASFRNIGEITELAGCDRLTISPGLLEELSNSDAPLEVKLKDTGATTTPGKPLDEAAFRWEMNQDAMATEKLSEGIRNFAADQVKLETLLKSYV.

K132 serves as the catalytic Schiff-base intermediate with substrate.

The protein belongs to the transaldolase family. Type 1 subfamily. As to quaternary structure, homodimer.

It is found in the cytoplasm. The catalysed reaction is D-sedoheptulose 7-phosphate + D-glyceraldehyde 3-phosphate = D-erythrose 4-phosphate + beta-D-fructose 6-phosphate. The protein operates within carbohydrate degradation; pentose phosphate pathway; D-glyceraldehyde 3-phosphate and beta-D-fructose 6-phosphate from D-ribose 5-phosphate and D-xylulose 5-phosphate (non-oxidative stage): step 2/3. In terms of biological role, transaldolase is important for the balance of metabolites in the pentose-phosphate pathway. The polypeptide is Transaldolase (Pseudoalteromonas atlantica (strain T6c / ATCC BAA-1087)).